We begin with the raw amino-acid sequence, 90 residues long: U7-theraphotoxin-Hhn1a 2 (90 aa).

The signal sequence occupies residues methionine 1–serine 19. The propeptide occupies phenylalanine 20–glutamate 50. Disulfide bonds link cysteine 51/cysteine 65, cysteine 58/cysteine 70, and cysteine 64/cysteine 81.

This sequence belongs to the neurotoxin 10 (Hwtx-1) family. 13 (Hntx-13) subfamily. In terms of tissue distribution, expressed by the venom gland.

It is found in the secreted. Functionally, ion channel inhibitor. The protein is U7-theraphotoxin-Hhn1a 2 of Cyriopagopus hainanus (Chinese bird spider).